Reading from the N-terminus, the 394-residue chain is Elongation factor Tu (394 aa).

The region spanning 10–204 (KEHANIGTIG…AVDTYIPTPE (195 aa)) is the tr-type G domain. The G1 stretch occupies residues 19–26 (GHVDHGKT). Position 19–26 (19–26 (GHVDHGKT)) interacts with GTP. Thr-26 contacts Mg(2+). The G2 stretch occupies residues 60 to 64 (GITIN). Positions 81–84 (DCPG) are G3. GTP contacts are provided by residues 81-85 (DCPGH) and 136-139 (NKVD). The segment at 136–139 (NKVD) is G4. The G5 stretch occupies residues 174–176 (SAL).

The protein belongs to the TRAFAC class translation factor GTPase superfamily. Classic translation factor GTPase family. EF-Tu/EF-1A subfamily. In terms of assembly, monomer.

It localises to the cytoplasm. The catalysed reaction is GTP + H2O = GDP + phosphate + H(+). Functionally, GTP hydrolase that promotes the GTP-dependent binding of aminoacyl-tRNA to the A-site of ribosomes during protein biosynthesis. The chain is Elongation factor Tu from Staphylococcus aureus (strain COL).